Consider the following 248-residue polypeptide: Protein maestro (248 aa).

A disordered region spans residues 1 to 21 (MDQRQRRILGQPLSIPTSQPK). The HEAT repeat unit spans residues 128 to 163 (SFFIDITLQTRTLLDDENDSLRYSAFVLFGQLAAFA).

In terms of tissue distribution, ubiquitous.

The protein resides in the nucleus. It localises to the nucleolus. The sequence is that of Protein maestro (MRO) from Homo sapiens (Human).